Reading from the N-terminus, the 347-residue chain is uncharacterized protein (347 aa).

5 disordered regions span residues 1 to 40 (MAQE…SNSM), 72 to 92 (SCED…IQGS), 133 to 158 (SDST…QLTL), 173 to 209 (ENQK…QVSH), and 306 to 347 (EDPR…PPDF). Residues 15–25 (PGQNITETTTD) show a composition bias toward polar residues. Basic and acidic residues predominate over residues 143 to 154 (GDNKDKHPKEKT). The segment covering 179-194 (KDDDSVFPESAQEEDS) has biased composition (acidic residues). Residues 195 to 209 (QLPSSSLPGMAQVSH) are compositionally biased toward polar residues. Residues 306-318 (EDPREANERPREL) show a composition bias toward basic and acidic residues. Positions 319–330 (ARKKRFSYRSKR) are enriched in basic residues.

This is an uncharacterized protein from Bos taurus (Bovine).